The chain runs to 119 residues: Ribosome-binding factor A (119 aa).

This sequence belongs to the RbfA family. In terms of assembly, monomer. Binds 30S ribosomal subunits, but not 50S ribosomal subunits or 70S ribosomes.

Its subcellular location is the cytoplasm. In terms of biological role, one of several proteins that assist in the late maturation steps of the functional core of the 30S ribosomal subunit. Associates with free 30S ribosomal subunits (but not with 30S subunits that are part of 70S ribosomes or polysomes). Required for efficient processing of 16S rRNA. May interact with the 5'-terminal helix region of 16S rRNA. This chain is Ribosome-binding factor A, found in Coxiella burnetii (strain CbuG_Q212) (Coxiella burnetii (strain Q212)).